The primary structure comprises 195 residues: Guanylate kinase (195 aa).

The region spanning 5–183 (GILFVISGPS…ALQKITAIII (179 aa)) is the Guanylate kinase-like domain. An ATP-binding site is contributed by 12-19 (GPSGVGKG).

Belongs to the guanylate kinase family.

The protein localises to the cytoplasm. The catalysed reaction is GMP + ATP = GDP + ADP. Its function is as follows. Essential for recycling GMP and indirectly, cGMP. This chain is Guanylate kinase, found in Syntrophomonas wolfei subsp. wolfei (strain DSM 2245B / Goettingen).